Consider the following 605-residue polypeptide: NADH-ubiquinone oxidoreductase chain 5 (605 aa).

A run of 15 helical transmembrane segments spans residues 8–28 (TLLS…YPYT), 34–54 (IYVK…TMIF), 87–107 (MILM…SMWY), 117–137 (FFKY…ANNL), 140–160 (LFIG…WWYG), 171–191 (AILY…WFLF), 241–261 (TPVS…FLLI), 273–293 (IQTM…ICAL), 301–321 (IVAF…GINQ), 324–344 (LAFL…LCSG), 366–386 (LPFT…MPFL), 409–429 (LFIT…IIYF), 457–477 (LLVG…PTTI), 482–502 (MPTY…IVAL), and 584–604 (IKLY…MLNF).

Belongs to the complex I subunit 5 family. As to quaternary structure, core subunit of respiratory chain NADH dehydrogenase (Complex I) which is composed of 45 different subunits.

The protein resides in the mitochondrion inner membrane. The enzyme catalyses a ubiquinone + NADH + 5 H(+)(in) = a ubiquinol + NAD(+) + 4 H(+)(out). Core subunit of the mitochondrial membrane respiratory chain NADH dehydrogenase (Complex I) which catalyzes electron transfer from NADH through the respiratory chain, using ubiquinone as an electron acceptor. Essential for the catalytic activity and assembly of complex I. The polypeptide is NADH-ubiquinone oxidoreductase chain 5 (MT-ND5) (Rousettus amplexicaudatus (Common rousette)).